The following is a 144-amino-acid chain: HTH-type transcriptional regulator BilQ (144 aa).

The HTH marR-type domain maps to 1–134 (MEQTFAYYTT…LFTLLQKLGK (134 aa)). The H-T-H motif DNA-binding region spans 48–71 (QRELAAAVRADEGYAARSVEKLLQ).

Its function is as follows. Transcription regulator that regulates expression of the bilirubin reductase operon (bilQ, bilR and bilS). The chain is HTH-type transcriptional regulator BilQ from Clostridium symbiosum (strain WAL-14163).